A 172-amino-acid chain; its full sequence is Large ribosomal subunit protein eL20A (172 aa).

S32 is subject to Phosphoserine. Residues K125, K131, and K149 each participate in a glycyl lysine isopeptide (Lys-Gly) (interchain with G-Cter in ubiquitin) cross-link.

It belongs to the eukaryotic ribosomal protein eL20 family. In terms of assembly, component of the large ribosomal subunit (LSU). Mature yeast ribosomes consist of a small (40S) and a large (60S) subunit. The 40S small subunit contains 1 molecule of ribosomal RNA (18S rRNA) and 33 different proteins (encoded by 57 genes). The large 60S subunit contains 3 rRNA molecules (25S, 5.8S and 5S rRNA) and 46 different proteins (encoded by 81 genes). eL20 forms multiple interactions with RNA and proteins in the central protuberance, connecting components of core functional centers that are located far apart.

The protein resides in the cytoplasm. Component of the ribosome, a large ribonucleoprotein complex responsible for the synthesis of proteins in the cell. The small ribosomal subunit (SSU) binds messenger RNAs (mRNAs) and translates the encoded message by selecting cognate aminoacyl-transfer RNA (tRNA) molecules. The large subunit (LSU) contains the ribosomal catalytic site termed the peptidyl transferase center (PTC), which catalyzes the formation of peptide bonds, thereby polymerizing the amino acids delivered by tRNAs into a polypeptide chain. The nascent polypeptides leave the ribosome through a tunnel in the LSU and interact with protein factors that function in enzymatic processing, targeting, and the membrane insertion of nascent chains at the exit of the ribosomal tunnel. The chain is Large ribosomal subunit protein eL20A from Saccharomyces cerevisiae (strain ATCC 204508 / S288c) (Baker's yeast).